The primary structure comprises 447 residues: UDP-N-acetylmuramoylalanine--D-glutamate ligase (447 aa).

130–136 contacts ATP; the sequence is GTSGKTT.

Belongs to the MurCDEF family.

The protein localises to the cytoplasm. It carries out the reaction UDP-N-acetyl-alpha-D-muramoyl-L-alanine + D-glutamate + ATP = UDP-N-acetyl-alpha-D-muramoyl-L-alanyl-D-glutamate + ADP + phosphate + H(+). It participates in cell wall biogenesis; peptidoglycan biosynthesis. Its function is as follows. Cell wall formation. Catalyzes the addition of glutamate to the nucleotide precursor UDP-N-acetylmuramoyl-L-alanine (UMA). In Oleidesulfovibrio alaskensis (strain ATCC BAA-1058 / DSM 17464 / G20) (Desulfovibrio alaskensis), this protein is UDP-N-acetylmuramoylalanine--D-glutamate ligase.